The following is a 541-amino-acid chain: GPI alpha-1,2-mannosyltransferase 3 (541 aa).

An N-linked (GlcNAc...) asparagine glycan is attached at Asn-18. A run of 9 helical transmembrane segments spans residues Leu-53–Val-73, Val-126–Leu-146, Leu-182–Gly-202, Leu-214–Phe-234, Asp-245–Ile-265, Gly-305–Pro-325, Ile-330–Phe-350, Phe-352–Lys-372, and Pro-377–His-397. Asn-417 carries N-linked (GlcNAc...) asparagine glycosylation.

Belongs to the glycosyltransferase 22 family. PIGB subfamily.

The protein resides in the endoplasmic reticulum membrane. It participates in glycolipid biosynthesis; glycosylphosphatidylinositol-anchor biosynthesis. Functionally, alpha-1,2-mannosyltransferase that catalyzes the transfer of the third mannose, via an alpha-1,2 bond, from a dolichol-phosphate-mannose (Dol-P-Man) to an alpha-D-Man-(1-&gt;6)-2-PEtn-alpha-D-Man-(1-&gt;4)-alpha-D-GlcN-(1-&gt;6)-(1-radyl,2-acyl-sn-glycero-3-phospho)-2-acyl-inositol intermediate to generate an alpha-D-Man-(1-&gt;2)-alpha-D-Man-(1-&gt;6)-2-PEtn-alpha-D-Man-(1-&gt;4)-alpha-D-GlcN-(1-&gt;6)-(1-radyl,2-acyl-sn-glycero-3-phospho)-2-acyl-inositol (also termed H6) and participates in the nineth step of the glycosylphosphatidylinositol-anchor biosynthesis. May also add the third mannose to an alpha-D-Man-(1-&gt;6)-alpha-D-Man-(1-&gt;4)-alpha-D-GlcN-(1-&gt;6)-(1-radyl,2-acyl-sn-glycero-3-phospho)-2-acyl-inositol (also termed H3) intermediate generating an alpha-D-Man-(1-&gt;2)-alpha-D-Man-(1-&gt;6)-alpha-D-Man-(1-&gt;4)-alpha-D-GlcN-(1-&gt;6)-(1-radyl,2-acyl-sn-glycero-3-phospho)-2-acyl-inositol (also termed H4). The protein is GPI alpha-1,2-mannosyltransferase 3 of Bos taurus (Bovine).